The following is a 333-amino-acid chain: Ketol-acid reductoisomerase (NADP(+)) (333 aa).

The KARI N-terminal Rossmann domain occupies 1 to 179; that stretch reads MFYDDDADLS…GGTRAGVIKT (179 aa). NADP(+) contacts are provided by residues 22-25, Lys-45, Ser-48, Ser-50, and 80-83; these read YGSQ and DTAQ. Residue His-105 is part of the active site. Gly-131 contacts NADP(+). Residues 180 to 325 form the KARI C-terminal knotted domain; it reads TFKDETETDL…KKLRDLMSWV (146 aa). Mg(2+) contacts are provided by Asp-188, Glu-192, Glu-224, and Glu-228. Ser-249 lines the substrate pocket.

Belongs to the ketol-acid reductoisomerase family. Mg(2+) is required as a cofactor.

The catalysed reaction is (2R)-2,3-dihydroxy-3-methylbutanoate + NADP(+) = (2S)-2-acetolactate + NADPH + H(+). The enzyme catalyses (2R,3R)-2,3-dihydroxy-3-methylpentanoate + NADP(+) = (S)-2-ethyl-2-hydroxy-3-oxobutanoate + NADPH + H(+). It participates in amino-acid biosynthesis; L-isoleucine biosynthesis; L-isoleucine from 2-oxobutanoate: step 2/4. Its pathway is amino-acid biosynthesis; L-valine biosynthesis; L-valine from pyruvate: step 2/4. In terms of biological role, involved in the biosynthesis of branched-chain amino acids (BCAA). Catalyzes an alkyl-migration followed by a ketol-acid reduction of (S)-2-acetolactate (S2AL) to yield (R)-2,3-dihydroxy-isovalerate. In the isomerase reaction, S2AL is rearranged via a Mg-dependent methyl migration to produce 3-hydroxy-3-methyl-2-ketobutyrate (HMKB). In the reductase reaction, this 2-ketoacid undergoes a metal-dependent reduction by NADPH to yield (R)-2,3-dihydroxy-isovalerate. The polypeptide is Ketol-acid reductoisomerase (NADP(+)) (Mycobacterium bovis (strain ATCC BAA-935 / AF2122/97)).